The sequence spans 563 residues: 5-aminolevulinate synthase, mitochondrial (563 aa).

Residues 1–18 (MESLVRQSKKLCPYIGRT) constitute a mitochondrion transit peptide. The substrate site is built by Arg-137, Ser-251, and Lys-270. Pyridoxal 5'-phosphate is bound by residues Ser-303, His-331, and Thr-373. The active site involves Lys-376. Lys-376 is subject to N6-(pyridoxal phosphate)lysine. Positions 405 and 406 each coordinate pyridoxal 5'-phosphate. Thr-491 provides a ligand contact to substrate.

The protein belongs to the class-II pyridoxal-phosphate-dependent aminotransferase family. In terms of assembly, homodimer. It depends on pyridoxal 5'-phosphate as a cofactor.

The protein resides in the mitochondrion matrix. It carries out the reaction succinyl-CoA + glycine + H(+) = 5-aminolevulinate + CO2 + CoA. Its pathway is porphyrin-containing compound metabolism; protoporphyrin-IX biosynthesis; 5-aminolevulinate from glycine: step 1/1. In terms of biological role, catalyzes the synthesis of 5-aminolevulinate (ALA) from succinyl-CoA and glycine, the first and rate-limiting step in heme biosynthesis. The sequence is that of 5-aminolevulinate synthase, mitochondrial (HEM1) from Yarrowia lipolytica (strain CLIB 122 / E 150) (Yeast).